The primary structure comprises 514 residues: 2,3-bisphosphoglycerate-independent phosphoglycerate mutase (514 aa).

Mn(2+) is bound by residues D14 and S64. S64 (phosphoserine intermediate) is an active-site residue. Substrate is bound by residues H125, 155 to 156 (RD), R187, R193, 263 to 266 (RADR), and K336. Residues D403, H407, D444, H445, and H463 each contribute to the Mn(2+) site.

This sequence belongs to the BPG-independent phosphoglycerate mutase family. In terms of assembly, monomer. The cofactor is Mn(2+).

The enzyme catalyses (2R)-2-phosphoglycerate = (2R)-3-phosphoglycerate. It functions in the pathway carbohydrate degradation; glycolysis; pyruvate from D-glyceraldehyde 3-phosphate: step 3/5. Catalyzes the interconversion of 2-phosphoglycerate and 3-phosphoglycerate. The polypeptide is 2,3-bisphosphoglycerate-independent phosphoglycerate mutase (Escherichia coli O1:K1 / APEC).